We begin with the raw amino-acid sequence, 73 residues long: MKHRLYSEGLSISNDLNSIIGQQSTMDTDIEIDEDDIMELLNILTELGCDVDFDENFSDIADDILESLIEQDI.

It belongs to the orthopoxvirus OPG058 family.

This is Protein OPG058 (OPG058) from Cynomys gunnisoni (Gunnison's prairie dog).